A 499-amino-acid chain; its full sequence is Potassium voltage-gated channel subfamily A member 2 (499 aa).

Residues 1-27 are disordered; that stretch reads MTVATGDLTDGSVGFAGHPQDSYDPEP. A tetramerization domain region spans residues 1–125; that stretch reads MTVATGDLTD…YELGEEAMEI (125 aa). Topologically, residues 1–160 are cytoplasmic; sequence MTVATGDLTD…LLFEYPESSG (160 aa). A helical transmembrane segment spans residues 161–182; sequence PARIIAIISVTVILISIVSFCL. Topologically, residues 183–221 are extracellular; the sequence is ETLPVFRDENEDMHGSGGNYYSYPNSTVRFQKSNTFTDP. N207 carries an N-linked (GlcNAc...) asparagine glycan. Residues 222 to 243 traverse the membrane as a helical segment; that stretch reads FFIVETLCIIWFSFEFLVRFLA. C244 is lipidated: S-palmitoyl cysteine. At 244–254 the chain is on the cytoplasmic side; that stretch reads CPSKAVFFTNL. The chain crosses the membrane as a helical span at residues 255–275; sequence MNIIDIVAIIPYFITLGTELA. Over 276-289 the chain is Extracellular; the sequence is EKTEDGQQGQQAMS. The chain crosses the membrane as a helical; Voltage-sensor span at residues 290–310; that stretch reads LAILRVIRLVRVFRIFKLSRH. Over 311–325 the chain is Cytoplasmic; sequence SKGLQILGQTLNASM. The segment at 312–325 is S4-S5 linker; sequence KGLQILGQTLNASM. A helical transmembrane segment spans residues 326 to 347; that stretch reads RELGLLIFFLFIGVILFSSAVF. Residues 348–361 are Extracellular-facing; sequence FAEADERDSQFPSI. Residues 362–373 constitute an intramembrane region (helical); sequence PDAFWWAVVSMT. The Selectivity filter motif lies at 374-379; that stretch reads TVGYGD. Residues 374-381 lie within the membrane without spanning it; that stretch reads TVGYGDMV. Residues 382 to 388 lie on the Extracellular side of the membrane; that stretch reads PTTIGGK. Residues 389–417 traverse the membrane as a helical segment; sequence IVGSLCAIAGVLTIALPVPVIVSNFNYFY. Residues 418–499 are Cytoplasmic-facing; sequence HRETEGEEQA…VNITKMLTDV (82 aa). Positions 497-499 match the PDZ-binding motif; sequence TDV.

It belongs to the potassium channel family. A (Shaker) (TC 1.A.1.2) subfamily. Kv1.2/KCNA2 sub-subfamily. As to quaternary structure, homotetramer and heterotetramer with other family members. Detected in tadpole brain and spinal cord.

Its subcellular location is the cell membrane. It carries out the reaction K(+)(in) = K(+)(out). In terms of biological role, voltage-gated potassium channel that mediates transmembrane potassium transport in excitable membranes, primarily in the brain and central nervous system. Prevents aberrant action potential firing and regulates neuronal output. Forms tetrameric potassium-selective channels through which potassium ions pass in accordance with their electrochemical gradient. The channel alternates between opened and closed conformations in response to the voltage difference across the membrane. Can form functional homotetrameric channels and heterotetrameric channels with other family members; the channels characteristics depend critically on the types of channel-forming alpha subunits that are present. Channel properties are modulated by cytoplasmic beta subunits that regulate the subcellular location of the alpha subunits. In vivo, membranes probably contain a mixture of heteromeric potassium channel complexes, making it difficult to assign currents observed in intact tissues to any particular potassium channel family member. Homotetrameric KCNA2 forms a delayed-rectifier potassium channel that opens in response to membrane depolarization, followed by slow spontaneous channel closure. Regulates neuronal excitability and plays a role as pacemaker in the regulation of neuronal action potentials. KCNA2-containing channels play a presynaptic role and prevent hyperexcitability and aberrant action potential firing. Response to toxins that are selective for KCNA2-containing potassium channels suggests that in Purkinje cells, dendritic subthreshold KCNA2-containing potassium channels prevent random spontaneous calcium spikes, suppressing dendritic hyperexcitability without hindering the generation of somatic action potentials, and thereby play an important role in motor coordination. Plays a role in the induction of long-term potentiation of neuron excitability in the CA3 layer of the hippocampus. This chain is Potassium voltage-gated channel subfamily A member 2 (kcna2), found in Xenopus laevis (African clawed frog).